The following is a 65-amino-acid chain: Hirudin-3B (65 aa).

An interaction with thrombin active site region spans residues 1 to 3 (VVY). Disulfide bonds link Cys-6-Cys-14, Cys-16-Cys-28, and Cys-22-Cys-39. A disordered region spans residues 40 to 65 (VTGEGTPKPQSHNDGDFEEIPEEYLQ). O-linked (GalNAc...) threonine glycosylation occurs at Thr-45. The interval 55 to 65 (DFEEIPEEYLQ) is interaction with fibrinogen-binding exosite of thrombin. Positions 55–65 (DFEEIPEEYLQ) are enriched in acidic residues. Tyr-63 carries the post-translational modification Sulfotyrosine.

The protein belongs to the protease inhibitor I14 (hirudin) family.

The protein resides in the secreted. Functionally, hirudin is a potent thrombin-specific protease inhibitor. It forms a stable non-covalent complex with alpha-thrombin, thereby abolishing its ability to cleave fibrinogen. The protein is Hirudin-3B of Hirudo medicinalis (Medicinal leech).